A 292-amino-acid polypeptide reads, in one-letter code: Nucleotide-binding protein AZOSEA20610 (292 aa).

8 to 15 provides a ligand contact to ATP; that stretch reads GLSGSGKS. Position 57-60 (57-60) interacts with GTP; the sequence is DVRS.

The protein belongs to the RapZ-like family.

Displays ATPase and GTPase activities. This chain is Nucleotide-binding protein AZOSEA20610, found in Aromatoleum aromaticum (strain DSM 19018 / LMG 30748 / EbN1) (Azoarcus sp. (strain EbN1)).